We begin with the raw amino-acid sequence, 1487 residues long: Golgin subfamily A member 3 (1487 aa).

Met1 is modified (N-acetylmethionine). Positions 1 to 118 (MDGASAKQDG…GTSAEGSVRK (118 aa)) are disordered. Phosphoserine occurs at positions 18 and 60. The span at 62-74 (DRSSQVAICQNGQ) shows a compositional bias: polar residues. The interval 121 to 141 (LQSLRLSLPMQETQLCSTASS) is interaction with GOPC. Positions 172 to 257 (ERSSQPATKM…DYRTEDPSDS (86 aa)) are golgi-targeting domain. Disordered regions lie at residues 221-321 (PKVG…SSLS) and 365-394 (AAQHQDQNQEANGEVRSRRDSICSSVSMES). Composition is skewed to low complexity over residues 269 to 288 (SSLKQSRSSTSVVSEVSPSS), 312 to 321 (SDSSSHSSLS), and 365 to 375 (AAQHQDQNQEA). Ser270 carries the post-translational modification Phosphoserine. The stretch at 358-1454 (KDVLQAAAAQ…TITVHESLSS (1097 aa)) forms a coiled coil. Ser381, Ser385, and Ser461 each carry phosphoserine. The span at 785 to 796 (KEELDRGARRLE) shows a compositional bias: basic and acidic residues. The tract at residues 785-804 (KEELDRGARRLEEDTEETSG) is disordered. A Phosphoserine modification is found at Ser979. The span at 1372 to 1382 (RGAAKKKEPKG) shows a compositional bias: basic and acidic residues. Disordered regions lie at residues 1372–1396 (RGAAKKKEPKGESNSSSPATPIKIP) and 1458–1487 (VEAAPAEHAHPRGDTKLHNQNSVPRDGLGQ). The residue at position 1387 (Ser1387) is a Phosphoserine. Residues 1462 to 1474 (PAEHAHPRGDTKL) are compositionally biased toward basic and acidic residues. At Ser1479 the chain carries Phosphoserine.

Homodimer. Interacts with GOLGA7. Interacts with GOPC. In terms of processing, cleaved by caspases in apoptotic cells. Highly expressed in testis. Transcripts can be found in spermatids during spermatogenesis. No expression in Leydig cells, spermatogonia or spermatocytes. Detected at low levels in all tissues.

The protein localises to the cytoplasm. It is found in the golgi apparatus. Its subcellular location is the golgi stack membrane. In terms of biological role, plays an important role in spermatogenesis and/or testis development. Probably identical with the serologically detectable male antigen (SDM). Probably involved in maintaining Golgi structure. This chain is Golgin subfamily A member 3 (Golga3), found in Mus musculus (Mouse).